The following is a 492-amino-acid chain: Probable malate:quinone oxidoreductase 1 (492 aa).

Belongs to the MQO family. FAD is required as a cofactor.

The catalysed reaction is (S)-malate + a quinone = a quinol + oxaloacetate. Its pathway is carbohydrate metabolism; tricarboxylic acid cycle; oxaloacetate from (S)-malate (quinone route): step 1/1. In Staphylococcus aureus (strain MRSA252), this protein is Probable malate:quinone oxidoreductase 1.